Reading from the N-terminus, the 309-residue chain is tRNA dimethylallyltransferase (309 aa).

11–18 (GPTATGKS) contacts ATP. Residue 13-18 (TATGKS) participates in substrate binding.

It belongs to the IPP transferase family. As to quaternary structure, monomer. Requires Mg(2+) as cofactor.

It catalyses the reaction adenosine(37) in tRNA + dimethylallyl diphosphate = N(6)-dimethylallyladenosine(37) in tRNA + diphosphate. In terms of biological role, catalyzes the transfer of a dimethylallyl group onto the adenine at position 37 in tRNAs that read codons beginning with uridine, leading to the formation of N6-(dimethylallyl)adenosine (i(6)A). This Rhodococcus jostii (strain RHA1) protein is tRNA dimethylallyltransferase.